A 157-amino-acid polypeptide reads, in one-letter code: Dihydrofolate reductase type 5 (157 aa).

Positions 2–156 (KVSLMAAKAK…INYCYQIWQK (155 aa)) constitute a DHFR domain.

This sequence belongs to the dihydrofolate reductase family. In terms of assembly, homodimer.

The enzyme catalyses (6S)-5,6,7,8-tetrahydrofolate + NADP(+) = 7,8-dihydrofolate + NADPH + H(+). Its pathway is cofactor biosynthesis; tetrahydrofolate biosynthesis; 5,6,7,8-tetrahydrofolate from 7,8-dihydrofolate: step 1/1. In terms of biological role, key enzyme in folate metabolism. Catalyzes an essential reaction for de novo glycine and purine synthesis, and for DNA precursor synthesis. The chain is Dihydrofolate reductase type 5 (dhfrV) from Escherichia coli.